Reading from the N-terminus, the 126-residue chain is Glycine cleavage system H protein (126 aa).

Residues 22–104 form the Lipoyl-binding domain; the sequence is KLRIGITDFA…YEKAWMIVIE (83 aa). Lysine 63 carries the N6-lipoyllysine modification.

It belongs to the GcvH family. In terms of assembly, the glycine cleavage system is composed of four proteins: P, T, L and H. (R)-lipoate serves as cofactor.

Functionally, the glycine cleavage system catalyzes the degradation of glycine. The H protein shuttles the methylamine group of glycine from the P protein to the T protein. Is also involved in protein lipoylation via its role as an octanoyl/lipoyl carrier protein intermediate. This chain is Glycine cleavage system H protein, found in Oceanobacillus iheyensis (strain DSM 14371 / CIP 107618 / JCM 11309 / KCTC 3954 / HTE831).